The sequence spans 433 residues: Cell division control protein KAR1 (433 aa).

Disordered stretches follow at residues 1–38 (MNVTSPKDGNHSFSKKNRFNTNKPRFHKLNEQAQSINL), 69–101 (TKNINSDSDRSNDTIKQNNYNKRETGYNPFYNG), and 207–227 (KPLPLPYLNSPNSDSTPTLQR). Thr233 carries the post-translational modification Phosphothreonine.

Interacts with SPC72.

The protein resides in the cytoplasm. It localises to the cytoskeleton. It is found in the microtubule organizing center. Its subcellular location is the spindle pole body. In terms of biological role, KAR1 is required for function of both intranuclear and extranuclear microtubules. KAR1 helps localize CDC31 to the spindle pole body (SPB), CDC31 then initiates SPB duplication via interaction with a downstream effector. In Saccharomyces cerevisiae (strain ATCC 204508 / S288c) (Baker's yeast), this protein is Cell division control protein KAR1 (KAR1).